The sequence spans 114 residues: Circadian clock oscillator protein KaiB (114 aa).

Belongs to the KaiB family. As to quaternary structure, may undergo a major conformational rearrangment; in the free state forms homooligomers. When bound to KaiC switches to a monomeric thioredoxin-fold (KaiB(fs)). The active oscillator complex is probably KaiC(6):KaiB(6).

Component of the KaiBC clock protein complex, which constitutes the main circadian regulator in cyanobacteria; it may modify the ATPase activity of KaiC. In terms of biological role, may be a metamorphic protein which reversibly switches between an inactive tetrameric fold and a rare, thioredoxin-like monomeric fold (KaiB(fs)). KaiB(fs) binds phospho-KaiC, and perhaps clock output effectors. This is Circadian clock oscillator protein KaiB from Prochlorococcus marinus (strain MIT 9211).